Here is a 197-residue protein sequence, read N- to C-terminus: Endonuclease V (197 aa).

The Mg(2+) site is built by Asp-37 and Glu-101.

The protein belongs to the endonuclease V family. The cofactor is Mg(2+).

Its subcellular location is the cytoplasm. The enzyme catalyses Endonucleolytic cleavage at apurinic or apyrimidinic sites to products with a 5'-phosphate.. In terms of biological role, DNA repair enzyme involved in the repair of deaminated bases. Selectively cleaves double-stranded DNA at the second phosphodiester bond 3' to a deoxyinosine leaving behind the intact lesion on the nicked DNA. The sequence is that of Endonuclease V from Thermococcus kodakarensis (strain ATCC BAA-918 / JCM 12380 / KOD1) (Pyrococcus kodakaraensis (strain KOD1)).